The primary structure comprises 428 residues: Putative aminotransferase MSMEG_6286/MSMEI_6121 (428 aa).

Position 37 (G37) interacts with substrate. Pyridoxal 5'-phosphate-binding positions include Y72, 102–105 (ASLE), N191, 222–225 (AYAV), and 256–258 (STS). K339 participates in a covalent cross-link: Isoglutamyl lysine isopeptide (Lys-Gln) (interchain with Q-Cter in protein Pup).

The protein belongs to the class-I pyridoxal-phosphate-dependent aminotransferase family. It depends on pyridoxal 5'-phosphate as a cofactor.

This chain is Putative aminotransferase MSMEG_6286/MSMEI_6121, found in Mycolicibacterium smegmatis (strain ATCC 700084 / mc(2)155) (Mycobacterium smegmatis).